Here is a 132-residue protein sequence, read N- to C-terminus: MRDSVLSVIFALALFLECYTPSMAIPMGKMEDTALEQDTLDSLLNEEVADKNPDSVRSGSSKIIVLADSGMWKNLNRGLPLYKLKAAAAGLDRALTLDRREADQDLSPSISIVRRDTMRCMVGRVYRPCWEV.

The N-terminal stretch at 1 to 24 (MRDSVLSVIFALALFLECYTPSMA) is a signal peptide. A disulfide bridge connects residues C120 and C129.

Belongs to the melanin-concentrating hormone family. As to expression, pituitary gland. Produced in neurons of lateral basal hypothalamus which project both to the brain and to the neural lobe of the pituitary gland from where MCH is released.

Plays a role in skin pigmentation by antagonizing the action of melanotropin alpha. Induces melanin concentration within the melanophores. May participate in the control of the hypothalamo-pituitary adrenal gland axis by inhibiting the release of ACTH. The protein is Pro-MCH 2 (mch2) of Oncorhynchus keta (Chum salmon).